Here is a 121-residue protein sequence, read N- to C-terminus: Large ribosomal subunit protein bL19 (121 aa).

It belongs to the bacterial ribosomal protein bL19 family.

This protein is located at the 30S-50S ribosomal subunit interface and may play a role in the structure and function of the aminoacyl-tRNA binding site. The sequence is that of Large ribosomal subunit protein bL19 from Neisseria meningitidis serogroup C (strain 053442).